A 278-amino-acid polypeptide reads, in one-letter code: Envelope glycoprotein L (278 aa).

The first 30 residues, 1 to 30 (MCRRPDCGFSFSPGPVVLLWCCLLLPIVSS), serve as a signal peptide directing secretion. In terms of domain architecture, gL betaherpesvirus-type spans 43-256 (VPAECPELTR…DKYYAGLPPE (214 aa)). Cys-154 and Cys-159 form a disulfide bridge.

It belongs to the herpesviridae glycoprotein L (gL) family. Betaherpesvirinae gL subfamily. Interacts with glycoprotein H (gH); this interaction is necessary for the correct processing and cell surface expression of gH. Forms the envelope pentamer complex (PC) composed of gH, gL, UL128, UL130, and UL131A. The pentamer interacts with host NRP2. Forms the envelope trimer complex composed of gH, gL, and gO. The trimer interacts with host PDGFRA.

The protein resides in the virion membrane. The protein localises to the host cell membrane. Its subcellular location is the host Golgi apparatus. It localises to the host trans-Golgi network. The heterodimer glycoprotein H-glycoprotein L is required for the fusion of viral and plasma membranes leading to virus entry into the host cell. Acts as a functional inhibitor of gH and maintains gH in an inhibited form. Upon binding to host integrins, gL dissociates from gH leading to activation of the viral fusion glycoproteins gB and gH. In human cytomegalovirus, forms two distincts complexes to mediate viral entry, a trimer and a pentamer at the surface of the virion envelope. The gH-gL-gO trimer is required for infection in fibroblasts by interacting with host PDGFRA. The gH-gL-UL128-UL130-UL131A pentamer is essential for viral entry in epithelial, endothelial and myeloid cells via interaction with host NRP2. The chain is Envelope glycoprotein L from Human cytomegalovirus (strain AD169) (HHV-5).